The primary structure comprises 297 residues: Non-homologous end-joining factor 1 (297 aa).

Residues 1–131 (MDARLLQLPW…ATVSTVCRHL (131 aa)) are globular head. The tract at residues 220–286 (PKAPTHPKEE…LTHRPPAGAS (67 aa)) is C-terminal tail. The disordered stretch occupies residues 222–297 (APTHPKEEDT…PKKKAKGLFM (76 aa)). The span at 232–255 (GNSASHRPMAESSSISFEKTVPTQ) shows a compositional bias: polar residues. A compositionally biased stretch (low complexity) spans 263 to 286 (VSEPSQVPQSSVSCLTHRPPAGAS). Positions 287 to 297 (KPKKKAKGLFM) match the XLM motif. Positions 287 to 297 (KPKKKAKGLFM) are enriched in basic residues.

It belongs to the XRCC4-XLF family. XLF subfamily. Homodimer. Interacts with xrcc4; the interaction is direct and is mediated via a head-to-head interaction between N-terminal head regions. Component of the core long-range non-homologous end joining (NHEJ) complex (also named DNA-PK complex) composed of prkdc/DNA-PKcs, lig4, xrcc4, xrcc6/Ku70, xrcc5/Ku80 and nhej1/xlf.

The protein resides in the nucleus. Its function is as follows. DNA repair protein involved in DNA non-homologous end joining (NHEJ); required for double-strand break (DSB) repair and V(D)J recombination. It is also involved in telomere maintenance. Plays a key role in NHEJ by promoting the ligation of various mismatched and non-cohesive ends. In some studies, has been shown to associate with xrcc4 to form alternating helical filaments that bridge DNA and act like a bandage, holding together the broken DNA until it is repaired. Alternatively, it has also been shown that rather than forming filaments, a single nhej1 dimer interacts through both head domains with xrcc4 to promote the close alignment of DNA ends. The xrcc4-nhej1/xlf subcomplex binds to the DNA fragments of a DSB in a highly diffusive manner and robustly bridges two independent DNA molecules, holding the broken DNA fragments in close proximity to one other. The mobility of the bridges ensures that the ends remain accessible for further processing by other repair factors. The protein is Non-homologous end-joining factor 1 of Xenopus laevis (African clawed frog).